We begin with the raw amino-acid sequence, 303 residues long: Coenzyme PQQ synthesis protein B (303 aa).

The protein belongs to the PqqB family.

It participates in cofactor biosynthesis; pyrroloquinoline quinone biosynthesis. Its function is as follows. May be involved in the transport of PQQ or its precursor to the periplasm. In Pseudomonas putida (strain GB-1), this protein is Coenzyme PQQ synthesis protein B.